Consider the following 410-residue polypeptide: MKIYLVGGAVRDALLEQPAGDRDWVVVGADQAQMEAQGFKPVGKDFPVFLHPRSGEEYALARTERKSGRGYRGFVVDADPSVTLEEDLLRRDFTINAIARDEDTGQLFDPYNGVRDLQARVLRHVGPAFIEDPVRVLRAARFMARLAPLGFSLAAETAALMRDMAAGGELDSLVPERVWQELRRALSCAQPSAFLRTLHDADALRVILPEVDALYGVPQRADFHPEVDTGIHQEMVSDIAARLAPGDALVGFAALTHDLGKALTPQAQWPRHVMHEQRGVAPLQALCERLKVPQDFRQLAIIACREHLNVHRLAELRDRTLHELLVRCDAFRRPERIAQLALVCEADKRGRLGSEEAAYPQGEALKRLHAAALAINARDLAAEGLQGPQIGEALTKARIAAIAAARNTGA.

Residues Gly8 and Arg11 each contribute to the ATP site. CTP is bound by residues Gly8 and Arg11. 2 residues coordinate Mg(2+): Asp21 and Asp23. 3 residues coordinate ATP: Arg91, Arg138, and Arg141. 3 residues coordinate CTP: Arg91, Arg138, and Arg141. The HD domain maps to 229 to 347 (TGIHQEMVSD…AQLALVCEAD (119 aa)).

The protein belongs to the tRNA nucleotidyltransferase/poly(A) polymerase family. Bacterial CCA-adding enzyme type 1 subfamily. As to quaternary structure, monomer. Can also form homodimers and oligomers. Mg(2+) serves as cofactor. The cofactor is Ni(2+).

The enzyme catalyses a tRNA precursor + 2 CTP + ATP = a tRNA with a 3' CCA end + 3 diphosphate. It carries out the reaction a tRNA with a 3' CCA end + 2 CTP + ATP = a tRNA with a 3' CCACCA end + 3 diphosphate. Functionally, catalyzes the addition and repair of the essential 3'-terminal CCA sequence in tRNAs without using a nucleic acid template. Adds these three nucleotides in the order of C, C, and A to the tRNA nucleotide-73, using CTP and ATP as substrates and producing inorganic pyrophosphate. tRNA 3'-terminal CCA addition is required both for tRNA processing and repair. Also involved in tRNA surveillance by mediating tandem CCA addition to generate a CCACCA at the 3' terminus of unstable tRNAs. While stable tRNAs receive only 3'-terminal CCA, unstable tRNAs are marked with CCACCA and rapidly degraded. The chain is Multifunctional CCA protein from Xanthomonas axonopodis pv. citri (strain 306).